Consider the following 370-residue polypeptide: Coiled-coil domain-containing protein 89 (370 aa).

The interval 1–21 (MPQEEKTLRMDTPPPDEILGK) is disordered. At Thr12 the chain carries Phosphothreonine. Positions 36–346 (KEMDGLREAL…YDELRLQSEA (311 aa)) form a coiled coil.

This sequence belongs to the CCDC89 family. In terms of assembly, interacts with HEY1. As to expression, expression is restricted to the adult testis, where localization is almost exclusive to round spermatids.

Its subcellular location is the cytoplasm. The protein resides in the nucleus. The chain is Coiled-coil domain-containing protein 89 from Mus musculus (Mouse).